Reading from the N-terminus, the 611-residue chain is Threonine--tRNA ligase (611 aa).

Residues 209–502 (DHRRLGKDLE…MTENYAGDFP (294 aa)) form a catalytic region. The Zn(2+) site is built by Cys302, His353, and His479.

This sequence belongs to the class-II aminoacyl-tRNA synthetase family. Homodimer. Zn(2+) serves as cofactor.

The protein localises to the cytoplasm. It catalyses the reaction tRNA(Thr) + L-threonine + ATP = L-threonyl-tRNA(Thr) + AMP + diphosphate + H(+). In terms of biological role, catalyzes the attachment of threonine to tRNA(Thr) in a two-step reaction: L-threonine is first activated by ATP to form Thr-AMP and then transferred to the acceptor end of tRNA(Thr). Also edits incorrectly charged L-seryl-tRNA(Thr). The protein is Threonine--tRNA ligase of Synechococcus sp. (strain CC9902).